Here is a 523-residue protein sequence, read N- to C-terminus: MNNSTSAGVYANGNDNKKFKGDRPPCSPSRVLHLRKIPCDVTEAEVISLGLPFGKVTNLLMLKGKSQAFLEMASEEAAVTMINYYTPVTPHLRSQPVYIQYSNHRELKTDNLPNQARAQAALQAVSAVQSGNLSLPGATSNEGTLLPGQSPVLRIIIENLFYPVTLEVLHQIFSKFGTVLKIITFTKNNQFQALLQYADPVNAQYAKMALDGQNIYNACCTLRIDFSKLTSLNVKYNNDKSRDFTRLDLPTGDGQPSLEPPMAAAFGAPGIMSSPYAGAAGFAPAIAFPQAAGLSVSAVPGALGPLTLTSSAVSGRMAIPGASGIPGNSVLLVTNLNPDFITPHGLFILFGVYGDVHRVKIMFNKKENALVQMADASQAQIAMNHLSGQRLYGKVLRATLSKHQAVQLPREGQEDQGLTKDFSNSPLHRFKKPGSKNFQNIFPPSATLHLSNIPPSVTMDDLKNLFTEAGCSVKAFKFFQKDRKMALIQLGSVEEAIQALIELHNHDLGENHHLRVSFSKSTI.

Residues 1–25 (MNNSTSAGVYANGNDNKKFKGDRPP) form a disordered region. RRM domains follow at residues 30-114 (RVLH…NLPN), 153-229 (LRII…FSKL), and 329-403 (SVLL…LSKH). Residue K36 forms a Glycyl lysine isopeptide (Lys-Gly) (interchain with G-Cter in SUMO2) linkage. A Phosphotyrosine modification is found at Y98. A Phosphothreonine modification is found at T109. A Glycyl lysine isopeptide (Lys-Gly) (interchain with G-Cter in SUMO2) cross-link involves residue K187. K394 bears the N6-acetyllysine mark. The segment at 406–426 (VQLPREGQEDQGLTKDFSNSP) is disordered. Residue S425 is modified to Phosphoserine. Positions 446–521 (ATLHLSNIPP…HHLRVSFSKS (76 aa)) constitute an RRM 4 domain.

In terms of assembly, interacts with THBS4 (via the acidic amphipathic C-terminus). As to expression, detected specifically in spleen, thymus, lungs, and bone marrow.

In terms of biological role, RNA-binding protein that mediates pre-mRNA alternative splicing regulation. Plays a role in the regulation of cell proliferation, differentiation and migration. Positive regulator of EPO-dependent erythropoiesis. Participates in cell differentiation regulation by repressing tissue-specific exons. Promotes Fas exon 6 skipping. Binds RNA, preferentially to both poly(G) and poly(U). The polypeptide is Polypyrimidine tract-binding protein 3 (Ptbp3) (Rattus norvegicus (Rat)).